The chain runs to 621 residues: Pentatricopeptide repeat-containing protein At1g12620 (621 aa).

PPR repeat units follow at residues 36 to 70 (GKVS…RPRP), 71 to 105 (RLID…GIAH), 106 to 140 (NLYT…GYEP), 141 to 175 (DTVT…GHKP), 176 to 210 (TLIT…GFQP), 211 to 245 (NEVT…KIKL), 246 to 280 (DAVK…GFKA), 281 to 315 (DIII…KITP), 316 to 350 (DVVA…GISP), 351 to 385 (DTVT…GCGP), 386 to 420 (NIRT…GVVA), 421 to 455 (DTVT…RVRP), 456 to 490 (DIVS…KMEL), 491 to 525 (DIGI…GVKP), 526 to 560 (DVKT…GHSP), and 561 to 595 (NGCT…GFSV).

This sequence belongs to the PPR family. P subfamily.

This chain is Pentatricopeptide repeat-containing protein At1g12620, found in Arabidopsis thaliana (Mouse-ear cress).